An 860-amino-acid chain; its full sequence is Pentatricopeptide repeat-containing protein At1g18900 (860 aa).

8 PPR repeats span residues 363–397, 398–432, 433–467, 468–502, 503–537, 538–572, 573–607, and 608–642; these read DGHTYTTMVGNLGRAKQFGAINKLLDEMVRDGCQP, NTVTYNRLIHSYGRANYLNEAMNVFNQMQEAGCKP, DRVTYCTLIDIHAKAGFLDIAMDMYQRMQAGGLSP, DTFTYSVIINCLGKAGHLPAAHKLFCEMVDQGCTP, NLVTYNIMMDLHAKARNYQNALKLYRDMQNAGFEP, DKVTYSIVMEVLGHCGYLEEAEAVFTEMQQKNWIP, DEPVYGLLVDLWGKAGNVEKAWQWYQAMLHAGLRP, and NVPTCNSLLSTFLRVNKIAEAYELLQNMLALGLRP. A Smr domain is found at 760-843; that stretch reads INLHVMSEGT…NSGCFVGSGE (84 aa).

The protein belongs to the PPR family. P subfamily.

This chain is Pentatricopeptide repeat-containing protein At1g18900, found in Arabidopsis thaliana (Mouse-ear cress).